We begin with the raw amino-acid sequence, 468 residues long: Monocarboxylate transporter 6 (468 aa).

The Cytoplasmic portion of the chain corresponds to 1 to 13 (MARALEQADGRWA). A helical membrane pass occupies residues 14 to 34 (WVVLLSSLVTQALTLGFPTCI). Over 35–53 (GVFFTDLQRDFQASNSETS) the chain is Extracellular. A helical membrane pass occupies residues 54-74 (WFPSILGAMVHGGGPLCSILV). The Cytoplasmic portion of the chain corresponds to 75–80 (KHFGCR). The chain crosses the membrane as a helical span at residues 81–101 (VTMMLGGVLASLGMVVSTFSG). Serine 102 is a topological domain (extracellular). The chain crosses the membrane as a helical span at residues 103 to 122 (LTHLFLTAGVITGLGMCFSF). Topologically, residues 123-138 (QSSITVVGLYFVRRRP) are cytoplasmic. A helical membrane pass occupies residues 139–159 (LANALASMGLSMGVTLWPLLA). Residues 160–171 (RYLLETLGWRGA) lie on the Extracellular side of the membrane. The helical transmembrane segment at 172 to 192 (FLIFGGILLHCCVCGALLRPV) threads the bilayer. The Cytoplasmic segment spans residues 193–239 (ATNEVPEPKEDPLLPPKIPTRSCLATCVSTIRYHLAFDILRHNMGFC). A helical membrane pass occupies residues 240–260 (IYVTGVTWMNLGFALPHIFLV). Over 261–274 (PYAMHHGVDDYWAA) the chain is Extracellular. Residues 275–295 (MLMSIVGFCNIFLRPMAGLLL) form a helical membrane-spanning segment. Residues 296 to 306 (AGRKSLAAYRK) are Cytoplasmic-facing. The helical transmembrane segment at 307–327 (YLFAVAILINGLTNLICTVSA) threads the bilayer. The Extracellular portion of the chain corresponds to 328–330 (DFR). Residues 331-351 (VLLGYCLVYSLSMCGVGILVF) traverse the membrane as a helical segment. Residues 352–368 (QVLMDIVPMDRFPSALG) are Cytoplasmic-facing. The chain crosses the membrane as a helical span at residues 369-389 (LFTILCGVTSLISPPLAGLLL). At 390–396 (DKTNNFS) the chain is on the extracellular side. A helical transmembrane segment spans residues 397–417 (YVFYMSSGFLVSGSLILGVGF). Topologically, residues 418-468 (YAAEKKKLKQDGQAKMENATSEMTPMHDLTSEDKDSAKKQPYPESIYMTNV) are cytoplasmic. Residues 429–468 (GQAKMENATSEMTPMHDLTSEDKDSAKKQPYPESIYMTNV) are disordered. Over residues 446–455 (LTSEDKDSAK) the composition is skewed to basic and acidic residues.

The protein belongs to the major facilitator superfamily. Monocarboxylate porter (TC 2.A.1.13) family.

The protein localises to the cell membrane. Proton-linked monocarboxylate transporter. Catalyzes the rapid transport across the plasma membrane of many monocarboxylates such as lactate, pyruvate, branched-chain oxo acids derived from leucine, valine and isoleucine, and the ketone bodies acetoacetate, beta-hydroxybutyrate and acetate. In Mus musculus (Mouse), this protein is Monocarboxylate transporter 6 (Slc16a5).